We begin with the raw amino-acid sequence, 1408 residues long: DNA-directed RNA polymerase subunit beta' (1408 aa).

Residues C70, C72, C85, and C88 each contribute to the Zn(2+) site. Mg(2+)-binding residues include D460, D462, and D464. Residues C814, C887, C894, and C897 each coordinate Zn(2+).

The protein belongs to the RNA polymerase beta' chain family. In terms of assembly, the RNAP catalytic core consists of 2 alpha, 1 beta, 1 beta' and 1 omega subunit. When a sigma factor is associated with the core the holoenzyme is formed, which can initiate transcription. Mg(2+) is required as a cofactor. It depends on Zn(2+) as a cofactor.

The enzyme catalyses RNA(n) + a ribonucleoside 5'-triphosphate = RNA(n+1) + diphosphate. DNA-dependent RNA polymerase catalyzes the transcription of DNA into RNA using the four ribonucleoside triphosphates as substrates. The protein is DNA-directed RNA polymerase subunit beta' of Hydrogenovibrio crunogenus (strain DSM 25203 / XCL-2) (Thiomicrospira crunogena).